A 108-amino-acid polypeptide reads, in one-letter code: UPF0060 membrane protein CC_1976 (108 aa).

A run of 4 helical transmembrane segments spans residues 4–24 (FAIY…FWAW), 27–47 (LGKS…FALL), 59–79 (AFAA…QVVE), and 85–105 (RWDL…LFGP).

Belongs to the UPF0060 family.

The protein localises to the cell inner membrane. The polypeptide is UPF0060 membrane protein CC_1976 (Caulobacter vibrioides (strain ATCC 19089 / CIP 103742 / CB 15) (Caulobacter crescentus)).